The following is a 221-amino-acid chain: Urease accessory protein UreF (221 aa).

The protein belongs to the UreF family. UreD, UreF and UreG form a complex that acts as a GTP-hydrolysis-dependent molecular chaperone, activating the urease apoprotein by helping to assemble the nickel containing metallocenter of UreC. The UreE protein probably delivers the nickel.

The protein localises to the cytoplasm. Required for maturation of urease via the functional incorporation of the urease nickel metallocenter. The sequence is that of Urease accessory protein UreF from Microcystis aeruginosa (strain NIES-843 / IAM M-2473).